The chain runs to 365 residues: MKTTISVIKADVGSVAGHAVAHEALKKKCDEILAEARDTGILEDYYITNCGDDIDLIMTHRNGEENEEVHQTAWNAFREATEVARGLKLYGAGQDLLSDTFSGNIKGMGPGCAEMEFKERPSDPVIIFCCDKTEPGAFNLPLFRMFADPFNTAGLVIDPTLHNGYEFEVFDVVEHKKVTMACPDEMYDLLALLGSISRYVIKKIHRRDDGEIAASVSTERLNLMAGKYIGKDDPVAIVRAQSGFPAAGEVVEPFAFPHLVGGWMRGSHNGPLMPVAQRDATPVRFDGPPRVIGLGFQIADCKLVGPIDMFDDPSFDRSRQLASEIAEYMRRHGPFEPHRLPSDEMEYTSLPGVLEKLGDRFEDMD.

The Proton acceptor; for FBP phosphatase activity role is filled by Asp11. Residues Asp11, His18, Asp52, and Asp53 each coordinate Mg(2+). Position 18 (His18) interacts with beta-D-fructose 1,6-bisphosphate. His18 is a binding site for dihydroxyacetone phosphate. Tyr90 contacts beta-D-fructose 1,6-bisphosphate. Gln94 serves as a coordination point for Mg(2+). 103-104 (GN) is a binding site for beta-D-fructose 1,6-bisphosphate. Residue Asp131 participates in Mg(2+) binding. Lys132 lines the beta-D-fructose 1,6-bisphosphate pocket. Dihydroxyacetone phosphate is bound at residue Lys132. Tyr228 (proton donor/acceptor; for FBP aldolase activity) is an active-site residue. The Mg(2+) site is built by Lys231, Asp232, and Asp233. Lys231 acts as the Schiff-base intermediate with DHAP; for FBP aldolase activity in catalysis. Beta-D-fructose 1,6-bisphosphate is bound by residues 241–242 (QS), Arg265, Asp286, and Tyr347. Dihydroxyacetone phosphate is bound by residues Arg265 and Asp286.

Belongs to the FBP aldolase/phosphatase family. In terms of assembly, homooctamer; dimer of tetramers. It depends on Mg(2+) as a cofactor.

The enzyme catalyses beta-D-fructose 1,6-bisphosphate + H2O = beta-D-fructose 6-phosphate + phosphate. The catalysed reaction is beta-D-fructose 1,6-bisphosphate = D-glyceraldehyde 3-phosphate + dihydroxyacetone phosphate. It functions in the pathway carbohydrate biosynthesis; gluconeogenesis. In terms of biological role, catalyzes two subsequent steps in gluconeogenesis: the aldol condensation of dihydroxyacetone phosphate (DHAP) and glyceraldehyde-3-phosphate (GA3P) to fructose-1,6-bisphosphate (FBP), and the dephosphorylation of FBP to fructose-6-phosphate (F6P). This chain is Fructose-1,6-bisphosphate aldolase/phosphatase, found in Methanothermobacter marburgensis (strain ATCC BAA-927 / DSM 2133 / JCM 14651 / NBRC 100331 / OCM 82 / Marburg) (Methanobacterium thermoautotrophicum).